The chain runs to 511 residues: Maturase K (511 aa).

Belongs to the intron maturase 2 family. MatK subfamily.

It localises to the plastid. Usually encoded in the trnK tRNA gene intron. Probably assists in splicing its own and other chloroplast group II introns. This Lathraea clandestina (Purple toothwort) protein is Maturase K.